The chain runs to 232 residues: Putative N-acetylmannosamine-6-phosphate 2-epimerase (232 aa).

This sequence belongs to the NanE family.

The enzyme catalyses an N-acyl-D-glucosamine 6-phosphate = an N-acyl-D-mannosamine 6-phosphate. Its pathway is amino-sugar metabolism; N-acetylneuraminate degradation; D-fructose 6-phosphate from N-acetylneuraminate: step 3/5. Converts N-acetylmannosamine-6-phosphate (ManNAc-6-P) to N-acetylglucosamine-6-phosphate (GlcNAc-6-P). In Synechococcus elongatus (strain ATCC 33912 / PCC 7942 / FACHB-805) (Anacystis nidulans R2), this protein is Putative N-acetylmannosamine-6-phosphate 2-epimerase.